Reading from the N-terminus, the 277-residue chain is Large ribosomal subunit protein uL2 (277 aa).

A disordered region spans residues 225 to 277 (AMNPVDHPHGGGEGKTSGGRHPVSPWGRPEGKTRRANKPSDRFIIRRKSRKRR). Over residues 253 to 268 (PEGKTRRANKPSDRFI) the composition is skewed to basic and acidic residues.

This sequence belongs to the universal ribosomal protein uL2 family. In terms of assembly, part of the 50S ribosomal subunit. Forms a bridge to the 30S subunit in the 70S ribosome.

Functionally, one of the primary rRNA binding proteins. Required for association of the 30S and 50S subunits to form the 70S ribosome, for tRNA binding and peptide bond formation. It has been suggested to have peptidyltransferase activity; this is somewhat controversial. Makes several contacts with the 16S rRNA in the 70S ribosome. This chain is Large ribosomal subunit protein uL2, found in Tropheryma whipplei (strain TW08/27) (Whipple's bacillus).